The sequence spans 472 residues: MSTKDKLNLPPKRTINTRLSTPVHIPPPINSESTRITPQHGSPPRFGDHRISAAQGLFQRRRNARKIDHPLGWFLKNRHAAAHIPQRTTKTSQKLVLLPENHAVNSFNEEESNYEDLLTPSDAYNLIKLENLPRDKREELGFPRATAYCVCEAFQLPKVKHFLKHYHKVRAKKYDEVLYAVYHLPLVYGRSESCRVSSGPAPDDMPSSASNHNQKHLDSDKPDNENFDSHIISQLYRISEIFVFSYGVVVFWNFSLSQEKDILADLTFGGDNSLMVKPLAEEECEIEDLHFHYAPNTKRPRIYNDMIHIPSADNKMKLAMSHALAQSVKLSRFELRTDVTMNSALFYPKKLALYGHLGLSRVEVVRMSGHLFQLRVDVNLISNILDTPDFLWDSEPLLLPLYTAFREYLEIGPRTNVLNRRCKVIFDMLDIFGKSSADRKMNSITWIIIILISLFVIIFTLEVILRLRWAHR.

Disordered regions lie at residues 1 to 47 (MSTK…PRFG) and 197 to 223 (SSGPAPDDMPSSASNHNQKHLDSDKPD). The Lumenal portion of the chain corresponds to 1–443 (MSTKDKLNLP…KSSADRKMNS (443 aa)). Residues 30–40 (NSESTRITPQH) are compositionally biased toward polar residues. S42 is subject to Phosphoserine. A helical transmembrane segment spans residues 444–464 (ITWIIIILISLFVIIFTLEVI). Topologically, residues 465 to 472 (LRLRWAHR) are cytoplasmic.

The protein belongs to the RMD1/sif2 family. As to quaternary structure, interacts with sad1.

The protein localises to the nucleus membrane. This is Sad1-interacting factor 3 (sif3) from Schizosaccharomyces pombe (strain 972 / ATCC 24843) (Fission yeast).